Consider the following 91-residue polypeptide: Large ribosomal subunit protein bL27 (91 aa).

Positions 1–26 are disordered; the sequence is MAHKKGVGSSRNGRDSNPKMRGVKRF.

This sequence belongs to the bacterial ribosomal protein bL27 family.

The protein is Large ribosomal subunit protein bL27 of Chloroflexus aurantiacus (strain ATCC 29366 / DSM 635 / J-10-fl).